A 348-amino-acid chain; its full sequence is MDKTKALDAALTQIERAFGKGSIMRLGKSGAALEVETISTGSLGLDIALGIGGLPRGRVVEIFGPESSGKTTLALHTVAEAQKKGGVCAFIDAEHALDPLYARKLGVNLDDLLISQPDAGEQALEIADTLVRSGAIDVLVVDSVAALVPRAELEGEMGDSQPGMQARLMSQALRKLTASISRSNCMVIFINQIRMKIGVMYGSPETTTGGNALKFYASVRLDIRRIGAIKERDEVVGNQTRVKVVKNKLAPPFKQVEFDIMYGEGISKAGELIDLGVKAGVVDKSGSWFSHDSQRIGQGRENVKGFLKGHPDVAGRIEAAIRQNAGLIAERILGSSEDSEDGEDAAEA.

64–71 (GPESSGKT) provides a ligand contact to ATP.

The protein belongs to the RecA family.

The protein resides in the cytoplasm. Can catalyze the hydrolysis of ATP in the presence of single-stranded DNA, the ATP-dependent uptake of single-stranded DNA by duplex DNA, and the ATP-dependent hybridization of homologous single-stranded DNAs. It interacts with LexA causing its activation and leading to its autocatalytic cleavage. The chain is Protein RecA from Blastochloris viridis (Rhodopseudomonas viridis).